The following is a 450-amino-acid chain: Glutathione reductase (450 aa).

The FAD site is built by serine 14, glycine 15, glutamate 34, threonine 41, cysteine 42, and lysine 50. Residue serine 14 participates in glutathione binding. The cysteines at positions 42 and 47 are disulfide-linked. Tyrosine 99 contacts glutathione. FAD is bound at residue alanine 115. 6 residues coordinate NADP(+): alanine 175, isoleucine 178, glutamate 181, arginine 198, arginine 204, and glycine 262. Position 303 (aspartate 303) interacts with FAD. Glutamate 309 contacts NADP(+). Residue threonine 311 participates in FAD binding. Arginine 319 contacts glutathione. Valine 342 is an NADP(+) binding site. Histidine 439 is an FAD binding site. Histidine 439 acts as the Proton acceptor in catalysis.

Belongs to the class-I pyridine nucleotide-disulfide oxidoreductase family. In terms of assembly, homodimer. It depends on FAD as a cofactor.

The protein localises to the cytoplasm. It catalyses the reaction 2 glutathione + NADP(+) = glutathione disulfide + NADPH + H(+). In terms of biological role, catalyzes the reduction of glutathione disulfide (GSSG) to reduced glutathione (GSH). Constitutes the major mechanism to maintain a high GSH:GSSG ratio in the cytosol. The protein is Glutathione reductase (gor) of Escherichia coli (strain K12).